We begin with the raw amino-acid sequence, 233 residues long: Octanoyltransferase (233 aa).

One can recognise a BPL/LPL catalytic domain in the interval 38 to 218 (AGGPDTLLLL…AVCDALDGVL (181 aa)). Residues 57-66 (RRTEPHERPL) show a composition bias toward basic and acidic residues. The interval 57–77 (RRTEPHERPLDGTPVVDTDRG) is disordered. Substrate-binding positions include 76–83 (RGGKITWH), 148–150 (AIG), and 161–163 (GFA). The active-site Acyl-thioester intermediate is cysteine 179.

It belongs to the LipB family.

It is found in the cytoplasm. It catalyses the reaction octanoyl-[ACP] + L-lysyl-[protein] = N(6)-octanoyl-L-lysyl-[protein] + holo-[ACP] + H(+). The protein operates within protein modification; protein lipoylation via endogenous pathway; protein N(6)-(lipoyl)lysine from octanoyl-[acyl-carrier-protein]: step 1/2. Functionally, catalyzes the transfer of endogenously produced octanoic acid from octanoyl-acyl-carrier-protein onto the lipoyl domains of lipoate-dependent enzymes. Lipoyl-ACP can also act as a substrate although octanoyl-ACP is likely to be the physiological substrate. This is Octanoyltransferase from Mycolicibacterium paratuberculosis (strain ATCC BAA-968 / K-10) (Mycobacterium paratuberculosis).